The following is a 1342-amino-acid chain: Restriction of telomere capping protein 1 (1342 aa).

The tract at residues 1-39 (MSLSPHVENASIPKGSTPIPKNRNVSSIGKGEFLGSSSS) is disordered. 6 WD repeats span residues 207–248 (NKFS…SIDN), 256–296 (EHTR…SKSS), 305–342 (TASD…YKFA), 367–406 (AHTG…NAAE), 439–486 (NTGY…IPKH), and 489–527 (LSET…TVLE). Disordered stretches follow at residues 559–593 (PELQ…IGGI), 600–619 (TGLT…GPTF), 630–651 (ASSF…ENRE), 736–766 (KNAT…DDDD), and 788–831 (LMNE…DRSR). The span at 630-644 (ASSFNSSSASLTSLT) shows a compositional bias: low complexity. Acidic residues predominate over residues 753 to 766 (DDGDDDDDDDDDDD). The segment covering 815 to 824 (SSISSISASR) has biased composition (low complexity). One copy of the WD 7 repeat lies at 844-884 (KIQTLVDLISIATHNASVYLSIDDLTNFKIWILIRDSLLWD). Disordered regions lie at residues 942-963 (AFRA…KLKE) and 1014-1047 (DEHE…PILQ). Basic and acidic residues-rich tracts occupy residues 952–963 (DAEKKPVSKLKE) and 1016–1028 (HEHQ…HDSP). Phosphoserine occurs at positions 1037, 1081, 1088, 1090, 1124, and 1134. WD repeat units follow at residues 1130 to 1170 (SRPD…KQLY) and 1217 to 1256 (LFGI…LITN). An RING-type; degenerate zinc finger spans residues 1294–1336 (CVLCERPLKKLTMVILPCGHEGHFQCIQEWFLDENEQECPGGC).

The protein belongs to the WD repeat RTC1 family.

Its subcellular location is the vacuole. May be involved in a process influencing telomere capping. This chain is Restriction of telomere capping protein 1 (RTC1), found in Saccharomyces cerevisiae (strain JAY291) (Baker's yeast).